The following is a 265-amino-acid chain: Glutamate racemase (265 aa).

Substrate is bound by residues 12–13 and 44–45; these read DS and YG. Cys-75 acts as the Proton donor/acceptor in catalysis. 76-77 provides a ligand contact to substrate; sequence NT. Cys-183 acts as the Proton donor/acceptor in catalysis. Residue 184–185 coordinates substrate; the sequence is TH.

Belongs to the aspartate/glutamate racemases family.

It catalyses the reaction L-glutamate = D-glutamate. It functions in the pathway cell wall biogenesis; peptidoglycan biosynthesis. Provides the (R)-glutamate required for cell wall biosynthesis. The sequence is that of Glutamate racemase from Carboxydothermus hydrogenoformans (strain ATCC BAA-161 / DSM 6008 / Z-2901).